Reading from the N-terminus, the 212-residue chain is Adenylate kinase (212 aa).

14 to 19 (GSGKGT) provides a ligand contact to ATP. Residues 34 to 63 (STGDLFRKKISEDSRFAAQIQNYLSSGSYV) form an NMP region. Residues Thr-35, Arg-40, 61 to 63 (SYV), 89 to 92 (GYPR), and Gln-96 contribute to the AMP site. The segment at 126–163 (QRLFCQKCQKSYNLLLAKPKNGLKCDLDNTDLITRNDD) is LID. Arg-127 provides a ligand contact to ATP. Zn(2+) contacts are provided by Cys-130 and Cys-133. An ATP-binding site is contributed by 136-137 (SY). Zn(2+)-binding residues include Cys-150 and Asp-153. Residues Arg-160 and Arg-171 each contribute to the AMP site. ATP is bound at residue Gln-199.

This sequence belongs to the adenylate kinase family. Monomer.

The protein resides in the cytoplasm. It catalyses the reaction AMP + ATP = 2 ADP. Its pathway is purine metabolism; AMP biosynthesis via salvage pathway; AMP from ADP: step 1/1. Functionally, catalyzes the reversible transfer of the terminal phosphate group between ATP and AMP. Plays an important role in cellular energy homeostasis and in adenine nucleotide metabolism. The chain is Adenylate kinase from Mesomycoplasma hyopneumoniae (strain 232) (Mycoplasma hyopneumoniae).